A 116-amino-acid chain; its full sequence is Ig heavy chain V region 3-6 (116 aa).

The first 18 residues, 1 to 18 (MKVLSLLYLLTAIPGILS), serve as a signal peptide directing secretion. The framework-1 stretch occupies residues 19–48 (DVQLQESGPGLVKPSQSLSLTCSVTGYSIT). C40 and C114 form a disulfide bridge. A complementarity-determining-1 region spans residues 49 to 53 (SGYYW). The segment at 54-67 (NWIRQFPGNKLEWM) is framework-2. Residues 68 to 84 (GYISYDGSNNYNPSLKN) are complementarity-determining-2. The segment at 85-116 (RISITRDTSKNQFFLKLNSVTTEDTATYYCAR) is framework-3.

The polypeptide is Ig heavy chain V region 3-6 (Ighv3-6) (Mus musculus (Mouse)).